Here is a 259-residue protein sequence, read N- to C-terminus: Deoxyribose-phosphate aldolase (259 aa).

D102 functions as the Proton donor/acceptor in the catalytic mechanism. The Schiff-base intermediate with acetaldehyde role is filled by K167. The Proton donor/acceptor role is filled by K201.

Belongs to the DeoC/FbaB aldolase family. DeoC type 2 subfamily.

The protein localises to the cytoplasm. It catalyses the reaction 2-deoxy-D-ribose 5-phosphate = D-glyceraldehyde 3-phosphate + acetaldehyde. The protein operates within carbohydrate degradation; 2-deoxy-D-ribose 1-phosphate degradation; D-glyceraldehyde 3-phosphate and acetaldehyde from 2-deoxy-alpha-D-ribose 1-phosphate: step 2/2. Catalyzes a reversible aldol reaction between acetaldehyde and D-glyceraldehyde 3-phosphate to generate 2-deoxy-D-ribose 5-phosphate. This is Deoxyribose-phosphate aldolase from Escherichia fergusonii (strain ATCC 35469 / DSM 13698 / CCUG 18766 / IAM 14443 / JCM 21226 / LMG 7866 / NBRC 102419 / NCTC 12128 / CDC 0568-73).